Reading from the N-terminus, the 430-residue chain is Aspartate aminotransferase, mitochondrial (430 aa).

The N-terminal 29 residues, 1–29 (MALLHSGRVLSGMAAAFHPGLAAAASARA), are a transit peptide targeting the mitochondrion. T48 is modified (phosphothreonine). K59 is subject to N6-acetyllysine. G65 provides a ligand contact to substrate. K73 carries the N6-acetyllysine; alternate modification. K73 bears the N6-succinyllysine; alternate mark. Position 82 is an N6-acetyllysine (K82). The residue at position 90 (K90) is an N6-acetyllysine; alternate. K90 is modified (N6-succinyllysine; alternate). Position 96 is a 3'-nitrotyrosine; alternate (Y96). Phosphotyrosine; alternate is present on Y96. N6-acetyllysine; alternate is present on residues K107 and K122. N6-succinyllysine; alternate occurs at positions 107 and 122. Residue S143 is modified to Phosphoserine. N6-acetyllysine; alternate is present on K159. The residue at position 159 (K159) is an N6-succinyllysine; alternate. Residue W162 participates in substrate binding. An N6-acetyllysine; alternate modification is found at K185. K185 carries the post-translational modification N6-succinyllysine; alternate. N215 serves as a coordination point for substrate. Position 227 is an N6-succinyllysine (K227). K234 bears the N6-acetyllysine mark. N6-acetyllysine; alternate occurs at positions 279 and 296. K279 is modified (N6-(pyridoxal phosphate)lysine; alternate). Position 296 is an N6-succinyllysine; alternate (K296). K302 carries the N6-acetyllysine modification. K309 carries the post-translational modification N6-acetyllysine; alternate. K309 carries the N6-succinyllysine; alternate modification. Position 313 is an asymmetric dimethylarginine (R313). At K338 the chain carries N6-acetyllysine; alternate. N6-succinyllysine; alternate is present on K338. K345 is subject to N6-acetyllysine. Position 363 is an N6-acetyllysine; alternate (K363). K363 is modified (N6-succinyllysine; alternate). N6-acetyllysine occurs at positions 364 and 387. N6-acetyllysine; alternate is present on residues K396 and K404. Residues K396 and K404 each carry the N6-succinyllysine; alternate modification. R407 provides a ligand contact to substrate.

Belongs to the class-I pyridoxal-phosphate-dependent aminotransferase family. As to quaternary structure, homodimer. Pyridoxal 5'-phosphate is required as a cofactor. Expressed in all tissues tested: liver, pancreas, kidney, heart, spleen, arterioles, and lymphocytes.

The protein localises to the mitochondrion matrix. The protein resides in the cell membrane. The enzyme catalyses L-aspartate + 2-oxoglutarate = oxaloacetate + L-glutamate. It carries out the reaction L-kynurenine + 2-oxoglutarate = kynurenate + L-glutamate + H2O. Functionally, catalyzes the irreversible transamination of the L-tryptophan metabolite L-kynurenine to form kynurenic acid (KA). As a member of the malate-aspartate shuttle, it has a key role in the intracellular NAD(H) redox balance. Is important for metabolite exchange between mitochondria and cytosol, and for amino acid metabolism. Facilitates cellular uptake of long-chain free fatty acids. The protein is Aspartate aminotransferase, mitochondrial (Got2) of Rattus norvegicus (Rat).